The primary structure comprises 537 residues: DELLA protein GAI (537 aa).

The tract at residues 1–33 (MKRDHQEISGSGSNPAESSSIKGKLWEEDPDAG) is disordered. Residues 9 to 20 (SGSGSNPAESSS) show a composition bias toward low complexity. The short motif at 37 to 41 (DELLA) is the DELLA motif element. The interval 131–157 (KSDPGLEITRKRAKTESSSSSSSTTTR) is disordered. Over residues 147-156 (SSSSSSSTTT) the composition is skewed to low complexity. The GRAS domain occupies 162-533 (IDSQEAGVRL…RPLIAHLGLA (372 aa)). The interval 169–223 (VRLVHTLMACAEAVQQDNLKLADALVKHIGLLASSQTGAMRKVATYFAEALARRI) is leucine repeat I (LRI). The interval 241 to 306 (QIPFYETCPY…GGPPAFRLTG (66 aa)) is VHIID. Residues 272-276 (VHVID) carry the VHIID motif. A leucine repeat II (LRII) region spans residues 320 to 352 (QVGWKLAQLAERIGIEFEFRGFVANSLADLEPE). Residues 364 to 454 (VAVNAVFELH…ELYLGRQICN (91 aa)) form a PFYRE region. Residues 372–376 (LHPLL) carry the LXXLL motif motif. Residues 457–533 (ACEGMDRVER…RPLIAHLGLA (77 aa)) are SAW.

Belongs to the GRAS family. DELLA subfamily. In terms of processing, phosphorylated. Post-translationally, ubiquitinated. Upon GA application it is ubiquitinated, leading to its subsequent degradation.

Its subcellular location is the nucleus. Its function is as follows. Probable transcriptional regulator that acts as a repressor of the gibberellin (GA) signaling pathway. Probably acts by participating in large multiprotein complexes that represses transcription of GA-inducible genes. Upon GA application, it is degraded by the proteasome, allowing the GA signaling pathway. This chain is DELLA protein GAI (GAI), found in Gossypium hirsutum (Upland cotton).